Reading from the N-terminus, the 491-residue chain is AP-2 complex subunit mu (491 aa).

Ser-179, Ser-180, and Ser-181 each carry phosphoserine. The MHD domain maps to 209-490 (KDEVFLYVNE…ISKAGSYEVR (282 aa)).

The protein belongs to the adaptor complexes medium subunit family. As to quaternary structure, adaptor protein complex 2 (AP-2) is a heterotetramer composed of two large adaptins (alpha-type subunit APL3 and beta-type subunit APL1), a medium chain (mu-type subunit APM4) and a small adaptin (sigma-type subunit APS2).

It is found in the membrane. The protein localises to the clathrin-coated pit. The protein resides in the cytoplasmic vesicle. It localises to the clathrin-coated vesicle membrane. In terms of biological role, component of the adaptor complexes which link clathrin to receptors in coated vesicles. Clathrin-associated protein complexes are believed to interact with the cytoplasmic tails of membrane proteins, leading to their selection and concentration. In Saccharomyces cerevisiae (strain ATCC 204508 / S288c) (Baker's yeast), this protein is AP-2 complex subunit mu (APM4).